Here is a 230-residue protein sequence, read N- to C-terminus: Uracil-DNA glycosylase (230 aa).

Catalysis depends on D70, which acts as the Proton acceptor.

This sequence belongs to the uracil-DNA glycosylase (UDG) superfamily. UNG family.

It is found in the cytoplasm. It catalyses the reaction Hydrolyzes single-stranded DNA or mismatched double-stranded DNA and polynucleotides, releasing free uracil.. In terms of biological role, excises uracil residues from the DNA which can arise as a result of misincorporation of dUMP residues by DNA polymerase or due to deamination of cytosine. The chain is Uracil-DNA glycosylase from Pseudomonas fluorescens (strain ATCC BAA-477 / NRRL B-23932 / Pf-5).